The sequence spans 473 residues: Glutamate--tRNA ligase (473 aa).

A 'HIGH' region motif is present at residues 11 to 21 (PSPTGFLHIGG). The short motif at 240–244 (KLSKR) is the 'KMSKS' region element. Lys243 provides a ligand contact to ATP.

It belongs to the class-I aminoacyl-tRNA synthetase family. Glutamate--tRNA ligase type 1 subfamily. As to quaternary structure, monomer.

Its subcellular location is the cytoplasm. It catalyses the reaction tRNA(Glu) + L-glutamate + ATP = L-glutamyl-tRNA(Glu) + AMP + diphosphate. In terms of biological role, catalyzes the attachment of glutamate to tRNA(Glu) in a two-step reaction: glutamate is first activated by ATP to form Glu-AMP and then transferred to the acceptor end of tRNA(Glu). The chain is Glutamate--tRNA ligase from Rhodopseudomonas palustris (strain HaA2).